Reading from the N-terminus, the 640-residue chain is Threonine--tRNA ligase (640 aa).

Residues 1-61 (MPTITLPDGS…ENDASLQIIT (61 aa)) enclose the TGS domain. The segment at 242–533 (DHRKIGKRLG…LIEHYEGAFP (292 aa)) is catalytic. Residues C333, H384, and H510 each contribute to the Zn(2+) site.

The protein belongs to the class-II aminoacyl-tRNA synthetase family. In terms of assembly, homodimer. Zn(2+) is required as a cofactor.

The protein localises to the cytoplasm. The catalysed reaction is tRNA(Thr) + L-threonine + ATP = L-threonyl-tRNA(Thr) + AMP + diphosphate + H(+). Catalyzes the attachment of threonine to tRNA(Thr) in a two-step reaction: L-threonine is first activated by ATP to form Thr-AMP and then transferred to the acceptor end of tRNA(Thr). Also edits incorrectly charged L-seryl-tRNA(Thr). This is Threonine--tRNA ligase from Pseudomonas syringae pv. syringae (strain B728a).